A 547-amino-acid polypeptide reads, in one-letter code: Calcium-dependent protein kinase 16 (547 aa).

The disordered stretch occupies residues 1 to 53 (MGNCCRSPAAAAREDVKTSHFPASTGGGKKKPHQARNGGGGGGGGGGGGWEKK). Residue Gly2 is the site of N-myristoyl glycine attachment. The span at 37–49 (NGGGGGGGGGGGG) shows a compositional bias: gly residues. Residues 73-331 (YALDRELGRG…AKQVLEHTWL (259 aa)) form the Protein kinase domain. ATP contacts are provided by residues 79–87 (LGRGEFGVT) and Lys102. Residue Asp197 is the Proton acceptor of the active site. The autoinhibitory domain stretch occupies residues 337-367 (APNVPLGDIVKSRLKQFSRMNRFKRRALRVI). EF-hand domains are found at residues 374–409 (EEVE…FGSH), 410–445 (LAES…LQRM), 446–481 (ANGE…DGAT), and 482–517 (DIME…GTDW). Asp387, Asp389, Asp391, Glu398, Asp423, Asn425, Glu434, Asp459, Asp461, Asn463, Tyr465, Glu470, Asp495, Asp497, Asp499, Lys501, and Glu506 together coordinate Ca(2+).

The protein belongs to the protein kinase superfamily. Ser/Thr protein kinase family. CDPK subfamily.

Its subcellular location is the membrane. It catalyses the reaction L-seryl-[protein] + ATP = O-phospho-L-seryl-[protein] + ADP + H(+). The enzyme catalyses L-threonyl-[protein] + ATP = O-phospho-L-threonyl-[protein] + ADP + H(+). Its activity is regulated as follows. Activated by calcium. Autophosphorylation may play an important role in the regulation of the kinase activity. May play a role in signal transduction pathways that involve calcium as a second messenger. The chain is Calcium-dependent protein kinase 16 from Oryza sativa subsp. japonica (Rice).